A 65-amino-acid chain; its full sequence is Large ribosomal subunit protein bL35 (65 aa).

The protein belongs to the bacterial ribosomal protein bL35 family.

This is Large ribosomal subunit protein bL35 from Prochlorococcus marinus (strain MIT 9215).